An 85-amino-acid polypeptide reads, in one-letter code: ATP synthase subunit c (85 aa).

The next 2 helical transmembrane spans lie at 10–30 and 53–73; these read IAVG…FALL and FIIA…ALLF.

This sequence belongs to the ATPase C chain family. F-type ATPases have 2 components, F(1) - the catalytic core - and F(0) - the membrane proton channel. F(1) has five subunits: alpha(3), beta(3), gamma(1), delta(1), epsilon(1). F(0) has three main subunits: a(1), b(2) and c(10-14). The alpha and beta chains form an alternating ring which encloses part of the gamma chain. F(1) is attached to F(0) by a central stalk formed by the gamma and epsilon chains, while a peripheral stalk is formed by the delta and b chains.

It is found in the cell inner membrane. In terms of biological role, f(1)F(0) ATP synthase produces ATP from ADP in the presence of a proton or sodium gradient. F-type ATPases consist of two structural domains, F(1) containing the extramembraneous catalytic core and F(0) containing the membrane proton channel, linked together by a central stalk and a peripheral stalk. During catalysis, ATP synthesis in the catalytic domain of F(1) is coupled via a rotary mechanism of the central stalk subunits to proton translocation. Its function is as follows. Key component of the F(0) channel; it plays a direct role in translocation across the membrane. A homomeric c-ring of between 10-14 subunits forms the central stalk rotor element with the F(1) delta and epsilon subunits. The sequence is that of ATP synthase subunit c from Aliivibrio fischeri (strain ATCC 700601 / ES114) (Vibrio fischeri).